Here is a 67-residue protein sequence, read N- to C-terminus: MAVPKRKMSRSNTRARRSQWKAEAPTLVKTIENGKVVYSMPHRARVVEDAAGTPLYMEYKGRKVADV.

The segment covering 1–19 (MAVPKRKMSRSNTRARRSQ) has biased composition (basic residues). The tract at residues 1-21 (MAVPKRKMSRSNTRARRSQWK) is disordered.

Belongs to the bacterial ribosomal protein bL32 family.

The chain is Large ribosomal subunit protein bL32 from Clavibacter michiganensis subsp. michiganensis (strain NCPPB 382).